A 121-amino-acid polypeptide reads, in one-letter code: Small ribosomal subunit protein uS13 (121 aa).

The interval 94–121 (GLPVRGQRTRTNSRTRKGPKKGAAALKK) is disordered.

The protein belongs to the universal ribosomal protein uS13 family. As to quaternary structure, part of the 30S ribosomal subunit. Forms a loose heterodimer with protein S19. Forms two bridges to the 50S subunit in the 70S ribosome.

Functionally, located at the top of the head of the 30S subunit, it contacts several helices of the 16S rRNA. In the 70S ribosome it contacts the 23S rRNA (bridge B1a) and protein L5 of the 50S subunit (bridge B1b), connecting the 2 subunits; these bridges are implicated in subunit movement. Contacts the tRNAs in the A and P-sites. This is Small ribosomal subunit protein uS13 from Leptothrix cholodnii (strain ATCC 51168 / LMG 8142 / SP-6) (Leptothrix discophora (strain SP-6)).